We begin with the raw amino-acid sequence, 552 residues long: DNA ligase (552 aa).

Glu-229 is an ATP binding site. Catalysis depends on Lys-231, which acts as the N6-AMP-lysine intermediate. Positions 236 and 283 each coordinate ATP. Glu-283 and Glu-377 together coordinate Mg(2+). The ATP site is built by Lys-382 and Lys-397.

Belongs to the ATP-dependent DNA ligase family. As to quaternary structure, interacts with host TOP2A and TOP2B. Requires Mg(2+) as cofactor.

Its subcellular location is the host cytoplasm. It carries out the reaction ATP + (deoxyribonucleotide)n-3'-hydroxyl + 5'-phospho-(deoxyribonucleotide)m = (deoxyribonucleotide)n+m + AMP + diphosphate.. In terms of biological role, DNA ligase that seals nicks in double-stranded DNA during DNA replication, DNA recombination and DNA repair. Recruits cellular topoisomerase II to sites of viral replication and assembly. Contributes to the repair of the viral genome following UV irradiation. The chain is DNA ligase (OPG180) from Vaccinia virus (strain Western Reserve) (VACV).